The primary structure comprises 353 residues: Melanin-concentrating hormone receptor 1 (353 aa).

The interval 1 to 31 (MDLEASLLPTGPNTSNTSDGPDNLTSAGSPP) is disordered. Residues 1-45 (MDLEASLLPTGPNTSNTSDGPDNLTSAGSPPRSGSVSYINIIMPS) lie on the Extracellular side of the membrane. Residues 11 to 31 (GPNTSNTSDGPDNLTSAGSPP) show a composition bias toward polar residues. Residues Asn-13, Asn-16, and Asn-23 are each glycosylated (N-linked (GlcNAc...) asparagine). The helical transmembrane segment at 46–66 (VFGTICLLGIIGNSMVIFAVV) threads the bilayer. The Cytoplasmic portion of the chain corresponds to 67–79 (KKSKLHWCNNVPD). A helical transmembrane segment spans residues 80–100 (IFIINLSVVDLLFLLGMPFMI). Residues 101 to 118 (HQLMGNGVWHFGETMCTL) lie on the Extracellular side of the membrane. A disulfide bridge connects residues Cys-116 and Cys-194. The helical transmembrane segment at 119–139 (ITAMDANSQFTSTYILTAMAI) threads the bilayer. The Cytoplasmic portion of the chain corresponds to 140 to 161 (DRYLATVHPISSTKFRKPSVAT). A helical transmembrane segment spans residues 162-182 (LVICLLWALSFISITPVWLYA). Topologically, residues 183–204 (RLIPFPGGAVGCGIRLPNPDTD) are extracellular. A helical membrane pass occupies residues 205-225 (LYWFTLYQFFLAFALPFVVIT). Residues 226-257 (AAYVRILQRMTSSVAPASQRSIRLRTKRVTRT) are Cytoplasmic-facing. The helical transmembrane segment at 258 to 278 (AIAICLVFFVCWAPYYVLQLT) threads the bilayer. At 279 to 294 (QLSISRPTLTFVYLYN) the chain is on the extracellular side. A helical transmembrane segment spans residues 295-315 (AAISLGYANSCLNPFVYIVLC). At 316–353 (ETFRKRLVLSVKPAAQGQLRAVSNAQTADEERTESKGT) the chain is on the cytoplasmic side.

The protein belongs to the G-protein coupled receptor 1 family. Interacts with NCDN.

It localises to the cell membrane. Its function is as follows. Receptor for melanin-concentrating hormone, coupled to both G proteins that inhibit adenylyl cyclase and G proteins that activate phosphoinositide hydrolysis. The chain is Melanin-concentrating hormone receptor 1 from Macaca mulatta (Rhesus macaque).